The sequence spans 271 residues: Putative pyruvate, phosphate dikinase regulatory protein (271 aa).

ADP is bound at residue 150-157; the sequence is GVSRTSKT.

It belongs to the pyruvate, phosphate/water dikinase regulatory protein family. PDRP subfamily.

The catalysed reaction is N(tele)-phospho-L-histidyl/L-threonyl-[pyruvate, phosphate dikinase] + ADP = N(tele)-phospho-L-histidyl/O-phospho-L-threonyl-[pyruvate, phosphate dikinase] + AMP + H(+). It carries out the reaction N(tele)-phospho-L-histidyl/O-phospho-L-threonyl-[pyruvate, phosphate dikinase] + phosphate + H(+) = N(tele)-phospho-L-histidyl/L-threonyl-[pyruvate, phosphate dikinase] + diphosphate. Bifunctional serine/threonine kinase and phosphorylase involved in the regulation of the pyruvate, phosphate dikinase (PPDK) by catalyzing its phosphorylation/dephosphorylation. This Oceanobacillus iheyensis (strain DSM 14371 / CIP 107618 / JCM 11309 / KCTC 3954 / HTE831) protein is Putative pyruvate, phosphate dikinase regulatory protein.